Reading from the N-terminus, the 435-residue chain is GTPase Obg (435 aa).

Residues 1-159 (MAFIDKCKIV…IEVVLELKTI (159 aa)) enclose the Obg domain. An OBG-type G domain is found at 160 to 329 (ADIGIIGLPN…MLDDVIKIYF (170 aa)). Residues 166-173 (GLPNAGKS), 191-195 (FTTLN), 212-215 (DIPG), 282-285 (NKID), and 310-312 (SAL) contribute to the GTP site. Residues Ser173 and Thr193 each coordinate Mg(2+). The OCT domain occupies 355–435 (TPKNKELDKT…IYDITLEFEE (81 aa)).

It belongs to the TRAFAC class OBG-HflX-like GTPase superfamily. OBG GTPase family. As to quaternary structure, monomer. It depends on Mg(2+) as a cofactor.

The protein resides in the cytoplasm. An essential GTPase which binds GTP, GDP and possibly (p)ppGpp with moderate affinity, with high nucleotide exchange rates and a fairly low GTP hydrolysis rate. Plays a role in control of the cell cycle, stress response, ribosome biogenesis and in those bacteria that undergo differentiation, in morphogenesis control. The protein is GTPase Obg of Ureaplasma urealyticum serovar 10 (strain ATCC 33699 / Western).